Reading from the N-terminus, the 1321-residue chain is MEPPGRRRGRAQPPLLLPLSLLALLALLGGGGGGGAAALPAGCKHDGRPRGAGRAAGAAEGKVVCSSLELAQVLPPDTLPNRTVTLILSNNKISELKNGSFSGLSLLERLDLRNNLISSIDPGAFWGLSSLKRLDLTNNRIGCLNADIFRGLTNLVRLNLSGNLFSSLSQGTFDYLASLRSLEFQTEYLLCDCNILWMHRWVKEKNITVRDTRCVYPKSLQAQPVTGVKQELLTCDPPLELPSFYMTPSHRQVVFEGDSLPFQCMASYIDQDMQVLWYQDGRIVETDESQGIFVEKNMIHNCSLIASALTISNIQAGSTGNWGCHVQTKRGNNTRTVDIVVLESSAQYCPPERVVNNKGDFRWPRTLAGITAYLQCTRNTHGSGIYPGNPQDERKAWRRCDRGGFWADDDYSRCQYANDVTRVLYMFNQMPLNLTNAVATARQLLAYTVEAANFSDKMDVIFVAEMIEKFGRFTKEEKSKELGDVMVDIASNIMLADERVLWLAQREAKACSRIVQCLQRIATYRLAGGAHVYSTYSPNIALEAYVIKSTGFTGMTCTVFQKVAASDRTGLSDYGRRDPEGNLDKQLSFKCNVSNTFSSLALKNTIVEASIQLPPSLFSPKQKRELRPTDDSLYKLQLIAFRNGKLFPATGNSTNLADDGKRRTVVTPVILTKIDGVNVDTHHIPVNVTLRRIAHGADAVAARWDFDLLNGQGGWKSDGCHILYSDENITTIQCYSLSNYAVLMDLTGSELYTQAASLLHPVVYTTAIILLLCLLAVIVSYIYHHSLIRISLKSWHMLVNLCFHIFLTCVVFVGGITQTRNASICQAVGIILHYSTLATVLWVGVTARNIYKQVTKKAKRCQDPDEPPPPPRPMLRFYLIGGGIPIIVCGITAAANIKNYGSRPNAPYCWMAWEPSLGAFYGPASFITFVNCMYFLSIFIQLKRHPERKYELKEPTEEQQRLAANENGEINHQDSMSLSLISTSALENEHTFHSQLLGASLTLLLYVALWMFGALAVSLYYPLDLVFSFVFGATSLSFSAFFVVHHCVNREDVRLAWIMTCCPGRSSYSVQVNVQPPNSNGTNGEAPKCPNSSAESSCTNKSASSFKNSSQGCKLTNLQAAAAQCHANSLPLNSTPQLDNSLTEHSMDNDIKMHVAPLEVQFRTNVHSSRHHKNRSKGHRASRLTVLREYAYDVPTSVEGSVQNGLPKSRLGNNEGHSRSRRAYLAYRERQYNPPQQDSSDACSTLPKSSRNFEKPVSTTSKKDALRKPAVVELENQQKSYGLNLAIQNGPIKSNGQEGPLLGTDSTGNVRTGLWKHETTV.

An N-terminal signal peptide occupies residues 1-33 (MEPPGRRRGRAQPPLLLPLSLLALLALLGGGGG). Topologically, residues 34-761 (GGAAALPAGC…YTQAASLLHP (728 aa)) are extracellular. N-linked (GlcNAc...) asparagine glycosylation is found at Asn81 and Asn98. 4 LRR repeats span residues 82–103 (RTVTLILSNNKISELKNGSFSG), 106–127 (LLERLDLRNNLISSIDPGAFWG), 130–151 (SLKRLDLTNNRIGCLNADIFRG), and 154–175 (NLVRLNLSGNLFSSLSQGTFDY). Asn159, Asn206, Asn301, Asn332, Asn433, Asn453, and Asn592 each carry an N-linked (GlcNAc...) asparagine glycan. One can recognise an LRRCT domain in the interval 187-237 (EYLLCDCNILWMHRWVKEKNITVRDTRCVYPKSLQAQPVTGVKQELLTCDP). Residues 242 to 340 (PSFYMTPSHR…GNNTRTVDIV (99 aa)) form the Ig-like domain. Cys264 and Cys324 are joined by a disulfide. In terms of domain architecture, GAIN-B spans 583–750 (LDKQLSFKCN…AVLMDLTGSE (168 aa)). One copy of the LRR 5 repeat lies at 594-620 (SNTFSSLALKNTIVEASIQLPPSLFSP). N-linked (GlcNAc...) asparagine glycosylation is found at Asn652, Asn687, and Asn728. Positions 701–750 (AARWDFDLLNGQGGWKSDGCHILYSDENITTIQCYSLSNYAVLMDLTGSE) are GPS. A disulfide bridge links Cys720 with Cys734. A helical membrane pass occupies residues 762–782 (VVYTTAIILLLCLLAVIVSYI). At 783 to 796 (YHHSLIRISLKSWH) the chain is on the cytoplasmic side. A helical transmembrane segment spans residues 797–817 (MLVNLCFHIFLTCVVFVGGIT). Topologically, residues 818 to 826 (QTRNASICQ) are extracellular. Asn821 carries N-linked (GlcNAc...) asparagine glycosylation. The helical transmembrane segment at 827–847 (AVGIILHYSTLATVLWVGVTA) threads the bilayer. At 848 to 876 (RNIYKQVTKKAKRCQDPDEPPPPPRPMLR) the chain is on the cytoplasmic side. The chain crosses the membrane as a helical span at residues 877 to 897 (FYLIGGGIPIIVCGITAAANI). Over 898 to 919 (KNYGSRPNAPYCWMAWEPSLGA) the chain is Extracellular. Residues 920 to 940 (FYGPASFITFVNCMYFLSIFI) form a helical membrane-spanning segment. Residues 941–996 (QLKRHPERKYELKEPTEEQQRLAANENGEINHQDSMSLSLISTSALENEHTFHSQL) lie on the Cytoplasmic side of the membrane. The helical transmembrane segment at 997–1017 (LGASLTLLLYVALWMFGALAV) threads the bilayer. Residues 1018–1024 (SLYYPLD) lie on the Extracellular side of the membrane. Residues 1025–1045 (LVFSFVFGATSLSFSAFFVVH) traverse the membrane as a helical segment. Residues 1046-1321 (HCVNREDVRL…TGLWKHETTV (276 aa)) are Cytoplasmic-facing. The segment covering 1073 to 1083 (NVQPPNSNGTN) has biased composition (polar residues). 4 disordered regions span residues 1073–1094 (NVQPPNSNGTNGEAPKCPNSSA), 1198–1219 (VEGSVQNGLPKSRLGNNEGHSR), 1231–1265 (QYNPPQQDSSDACSTLPKSSRNFEKPVSTTSKKDA), and 1294–1321 (SNGQEGPLLGTDSTGNVRTGLWKHETTV). The span at 1233–1250 (NPPQQDSSDACSTLPKSS) shows a compositional bias: polar residues. The short motif at 1319 to 1321 (TTV) is the PDZ-binding element.

Belongs to the G-protein coupled receptor 2 family. Adhesion G-protein coupled receptor (ADGR) subfamily. As to quaternary structure, interacts (via PDZ-binding motif) with DLG1.

The protein localises to the membrane. Orphan receptor that may have a role in planar cell polarity pathway. This Homo sapiens (Human) protein is Adhesion G protein-coupled receptor A3.